Reading from the N-terminus, the 287-residue chain is Pantothenate synthetase (287 aa).

30–37 is a binding site for ATP; the sequence is MGYLHEGH. Catalysis depends on H37, which acts as the Proton donor. (R)-pantoate is bound at residue Q61. Q61 is a beta-alanine binding site. 150–153 is a binding site for ATP; it reads GMKD. A (R)-pantoate-binding site is contributed by Q156. Residues V179 and 187–190 each bind ATP; that span reads LSSR.

Belongs to the pantothenate synthetase family. Homodimer.

The protein localises to the cytoplasm. The catalysed reaction is (R)-pantoate + beta-alanine + ATP = (R)-pantothenate + AMP + diphosphate + H(+). It functions in the pathway cofactor biosynthesis; (R)-pantothenate biosynthesis; (R)-pantothenate from (R)-pantoate and beta-alanine: step 1/1. Catalyzes the condensation of pantoate with beta-alanine in an ATP-dependent reaction via a pantoyl-adenylate intermediate. This Coprothermobacter proteolyticus (strain ATCC 35245 / DSM 5265 / OCM 4 / BT) protein is Pantothenate synthetase.